Here is a 420-residue protein sequence, read N- to C-terminus: Glucose-1-phosphate adenylyltransferase (420 aa).

Residues Y107, G172, 187–188 (EK), and S205 each bind alpha-D-glucose 1-phosphate.

This sequence belongs to the bacterial/plant glucose-1-phosphate adenylyltransferase family. Homotetramer.

The enzyme catalyses alpha-D-glucose 1-phosphate + ATP + H(+) = ADP-alpha-D-glucose + diphosphate. It participates in glycan biosynthesis; glycogen biosynthesis. Its function is as follows. Involved in the biosynthesis of ADP-glucose, a building block required for the elongation reactions to produce glycogen. Catalyzes the reaction between ATP and alpha-D-glucose 1-phosphate (G1P) to produce pyrophosphate and ADP-Glc. In Rhodopseudomonas palustris (strain TIE-1), this protein is Glucose-1-phosphate adenylyltransferase.